The following is a 431-amino-acid chain: Beta-1,4-glucuronyltransferase 1 (431 aa).

The Cytoplasmic portion of the chain corresponds to 1-11 (MHFSKKCSVFK). A helical transmembrane segment spans residues 12-32 (VVLSALLIVALLQLLYLSFLS). Residues 33-431 (KLHGKQQRYK…AKYPTSPRRC (399 aa)) are Lumenal-facing. Asn216 carries an N-linked (GlcNAc...) asparagine glycan. 2 residues coordinate Mn(2+): Asp241 and Asp243. Asn314 is a glycosylation site (N-linked (GlcNAc...) asparagine).

It belongs to the glycosyltransferase 49 family. Mn(2+) is required as a cofactor.

The protein localises to the golgi apparatus membrane. It catalyses the reaction 3-O-[beta-D-Xyl-(1-&gt;4)-Rib-ol-P-Rib-ol-P-3-beta-D-GalNAc-(1-&gt;3)-beta-D-GlcNAc-(1-&gt;4)-(O-6-P-alpha-D-Man)]-Thr-[protein] + UDP-alpha-D-glucuronate = 3-O-[beta-D-GlcA-(1-&gt;3)-beta-D-Xyl-(1-&gt;4)-Rib-ol-P-Rib-ol-P-3-beta-D-GalNAc-(1-&gt;3)-beta-D-GlcNAc-(1-&gt;4)-(O-6-P-alpha-D-Man)]-Thr-[protein] + UDP + H(+). It participates in protein modification; protein glycosylation. Functionally, beta-1,4-glucuronyltransferase involved in O-mannosylation of alpha-dystroglycan (DAG1). Transfers a glucuronic acid (GlcA) residue onto a xylose (Xyl) acceptor to produce the glucuronyl-beta-1,4-xylose-beta disaccharide primer, which is further elongated by LARGE, during synthesis of phosphorylated O-mannosyl glycan. Phosphorylated O-mannosyl glycan is a carbohydrate structure present in alpha-dystroglycan (DAG1), which is required for binding laminin G-like domain-containing extracellular proteins with high affinity. Required for axon guidance; via its function in O-mannosylation of alpha-dystroglycan (DAG1). This chain is Beta-1,4-glucuronyltransferase 1, found in Danio rerio (Zebrafish).